The chain runs to 426 residues: Histidine--tRNA ligase (426 aa).

The protein belongs to the class-II aminoacyl-tRNA synthetase family.

The protein localises to the cytoplasm. It catalyses the reaction tRNA(His) + L-histidine + ATP = L-histidyl-tRNA(His) + AMP + diphosphate + H(+). The chain is Histidine--tRNA ligase (hisS) from Thermoplasma volcanium (strain ATCC 51530 / DSM 4299 / JCM 9571 / NBRC 15438 / GSS1).